A 30-amino-acid chain; its full sequence is Photosystem I reaction center subunit XII (30 aa).

The chain crosses the membrane as a helical span at residues 6–26 (VFTILAIALVPAVMALLLGSA).

The protein belongs to the PsaM family.

It is found in the cellular thylakoid membrane. This is Photosystem I reaction center subunit XII from Synechococcus sp. (strain JA-2-3B'a(2-13)) (Cyanobacteria bacterium Yellowstone B-Prime).